Consider the following 317-residue polypeptide: tRNA dimethylallyltransferase (317 aa).

ATP is bound at residue 19-26 (GPTASGKS). 21–26 (TASGKS) contacts substrate. The tract at residues 49–52 (DSAQ) is interaction with substrate tRNA.

It belongs to the IPP transferase family. Monomer. Requires Mg(2+) as cofactor.

The enzyme catalyses adenosine(37) in tRNA + dimethylallyl diphosphate = N(6)-dimethylallyladenosine(37) in tRNA + diphosphate. Its function is as follows. Catalyzes the transfer of a dimethylallyl group onto the adenine at position 37 in tRNAs that read codons beginning with uridine, leading to the formation of N6-(dimethylallyl)adenosine (i(6)A). The chain is tRNA dimethylallyltransferase from Erythrobacter litoralis (strain HTCC2594).